The primary structure comprises 324 residues: MSLYMLVSTFAVAFIITVIGVPLFIPFLVKLKFGQSIRDEGPKMHEKKSGTPTMGAVVFITAMLISFLIFSFIGGEVSAATWLLFIALALFGALGFLDDYIKVVQKRNLGLTSKQKFLGQVAISILFYLVYHFSDFAETLNIPFTNIEVDLGWFFVIFILFWLVGFSNAVNLTDGLDGLVSGLSVIAFSAFGVIAFYQEQMDVAIFCFAIVGGMLGFLLFNKNPAKIFMGDTGSLALGGSIAAVSILVHQEWLLLLIGIIFVIETASVILQVFYFKATKGKRIFRMTPIHHHFELGGWSEWRVVLTFWGIGLVGAVISVCVVIF.

Transmembrane regions (helical) follow at residues 9-29, 54-74, 77-97, 117-137, 147-167, 176-196, 201-221, 227-247, 253-273, and 304-324; these read TFAV…PFLV, MGAV…SFIG, VSAA…LGFL, FLGQ…SDFA, IEVD…VGFS, LDGL…VIAF, MDVA…LLFN, IFMG…VSIL, LLLL…LQVF, and VLTF…VVIF.

Belongs to the glycosyltransferase 4 family. MraY subfamily. Mg(2+) is required as a cofactor.

It is found in the cell membrane. It catalyses the reaction UDP-N-acetyl-alpha-D-muramoyl-L-alanyl-gamma-D-glutamyl-meso-2,6-diaminopimeloyl-D-alanyl-D-alanine + di-trans,octa-cis-undecaprenyl phosphate = di-trans,octa-cis-undecaprenyl diphospho-N-acetyl-alpha-D-muramoyl-L-alanyl-D-glutamyl-meso-2,6-diaminopimeloyl-D-alanyl-D-alanine + UMP. It functions in the pathway cell wall biogenesis; peptidoglycan biosynthesis. In terms of biological role, catalyzes the initial step of the lipid cycle reactions in the biosynthesis of the cell wall peptidoglycan: transfers peptidoglycan precursor phospho-MurNAc-pentapeptide from UDP-MurNAc-pentapeptide onto the lipid carrier undecaprenyl phosphate, yielding undecaprenyl-pyrophosphoryl-MurNAc-pentapeptide, known as lipid I. In Listeria welshimeri serovar 6b (strain ATCC 35897 / DSM 20650 / CCUG 15529 / CIP 8149 / NCTC 11857 / SLCC 5334 / V8), this protein is Phospho-N-acetylmuramoyl-pentapeptide-transferase.